The following is a 2603-amino-acid chain: MEKATVPVAAATAAEGEGSPPAVAAVAGPPAAAEVGGGVGGSSRARSASSPRGMVRVCDLLLKKKPPQQQHHKAKRNRTCRPPSSSESSSDSDNSGGGGGGGGGGGGGGGTSSNNSEEEEDDDDEEEEVSEVESFILDQDDLENPMLETASKLLLSGTADGADLRTVDPETQARLEALLEAAGIGKLSTADGKAFADPEVLRRLTSSVSCALDEAAAALTRMRAESTANAGQSDNRSLAEACSEGDVNAVRKLLIEGRSVNEHTEEGESLLCLACSAGYYELAQVLLAMHANVEDRGIKGDITPLMAAANGGHVKIVKLLLAHKADVNAQSSTGNTALTYACAGGYVDVVKVLLESGASIEDHNENGHTPLMEAGSAGHVEVARLLLENGAGINTHSNEFKESALTLACYKGHLEMVRFLLEAGADQEHKTDEMHTALMEACMDGHVEVARLLLDSGAQVNMPADSFESPLTLAACGGHVELAALLIERGASLEEVNDEGYTPLMEAAREGHEEMVALLLGQGANINAQTEETQETALTLACCGGFLEVADFLIKAGADIELGCSTPLMEAAQEGHLELVKYLLAAGANVHATTATGDTALTYACENGHTDVADVLLQAGADLEHESEGGRTPLMKAARAGHVCTVQFLISKGANVNRTTANNDHTVLSLACAGGHLAVVELLLAHGADPTHRLKDGSTMLIEAAKGGHTSVVCYLLDYPNNLLSAPPPDVTQLTPPSHDLNRAPRVPVQALPMVVPPQEPDKPPANVATTLPIRNKAASKQKSSSHLPANSQDVQGYITNQSPESIVEEAQGKLTELEQRIKEAIEKNAQLQSLELAHADQLTKEKIEELNKTREEQIQKKQKILEELQKVERELQLKTQQQLKKQYLEVKAQRIQLQQQQQQSCQHLGLLTPVGVGEQLSEGDYARLQQVDPVLLKDEPQQTAAQMGFAPIQPLAMPQALPLAAGPLPPGSIANLTELQGVIVGQPVLGQAQLAGLGQGILTETQQGLMVASPAQTLNDTLDDIMAAVSGRASAMSNTPTHSIAASISQPQTPTPSPIISPSAMLPIYPAIDIDAQTESNHDTALTLACAGGHEELVQTLLERGASIEHRDKKGFTPLILAATAGHVGVVEILLDNGADIEAQSERTKDTPLSLACSGGRQEVVELLLARGANKEHRNVSDYTPLSLAASGGYVNIIKILLNAGAEINSRTGSKLGISPLMLAAMNGHTAAVKLLLDMGSDINAQIETNRNTALTLACFQGRTEVVSLLLDRKANVEHRAKTGLTPLMEAASGGYAEVGRVLLDKGADVNAPPVPSSRDTALTIAADKGHYKFCELLIGRGAHIDVRNKKGNTPLWLAANGGHLDVVQLLVQAGADVDAADNRKITPLMAAFRKGHVKVVRYLVKEVNQFPSDSECMRYIATITDKEMLKKCHLCMESIVQAKDRQAAEANKNASILLEELDLEKLREESRRLALAAKREKRKEKRRKKKEEQRRKLEEIEAKNKENFELQAAQEKEKLKVEDEPEVLTEPPSATTTTTIGISATWTTLAGSHGKRNNTITTTSSKRKNRKNKITPENVQIIFDDPLPISYSQPEKVNGESKSSSTSESGDSDNMRISSCSDESSNSNSSRKSDNHSPAVVTTTVSSKKQPSVLVTFPKEERKSVSGKASIKLSETISEGTSNSLSTCTKSGPSPLSSPNGKLTVASPKRGQKREEGWKEVVRRSKKVSVPSTVISRVIGRGGCNINAIREFTGAHIDIDKQKDKTGDRIITIRGGTESTRQATQLINALIKDPDKEIDELIPKNRLKSSSANSKIGSSAPTTTAANTSLMGIKMTTVALSSTSQTATALTVPAISSASTHKTIKNPVNNVRPGFPVSLPLAYPPPQFAHALLAAQTFQQIRPPRLPMTHFGGTFPPAQSTWGPFPVRPLSPARATNSPKPHMVPRHSNQNSSGSQVNSAGSLTSSPTTTTSSSASTVPGTSTNGSPSSPSVRRQLFVTVVKTSNATTTTVTTTASNNNTAPTNATYPMPTAKEHYPVSSPSSPSPPAQPGGVSRNSPLDCGSASPNKVASSSEQEAGSPPVVETTNTRPPNSSSSSGSSSAHSNQQQPPGSVSQEPRPPLQQSQVPPPEVRMTVPPLATSSAPVAVPSTAPVTYPMPQTPMGCPQPTPKMETPAIRPPPHGTTAPHKNSASVQNSSVAVLSVNHIKRPHSVPSSVQLPSTLSTQSACQNSVHPANKPIAPNFSAPLPFGPFSTLFENSPTSAHAFWGGSVVSSQSTPESMLSGKSSYLPNSDPLHQSDTSKAPGFRPPLQRPAPSPSGIVNMDSPYGSVTPSSTHLGNFASNISGGQMYGPGAPLGGAPAAANFNRQHFSPLSLLTPCSSASNDSSAQSVSSGVRAPSPAPSSVPLGSEKPSNVSQDRKVPVPIGTERSARIRQTGTSAPSVIGSNLSTSVGHSGIWSFEGIGGNQDKVDWCNPGMGNPMIHRPMSDPGVFSQHQAMERDSTGIVTPSGTFHQHVPAGYMDFPKVGGMPFSVYGNAMIPPVAPIPDGAGGPIFNGPHAADPSWNSLIKMVSSSTENNGPQTVWTGPWAPHMNSVHMNQLG.

M1 is subject to N-acetylmethionine. Composition is skewed to low complexity over residues 1–34 (MEKATVPVAAATAAEGEGSPPAVAAVAGPPAAAE) and 42–53 (SSRARSASSPRG). The interval 1–143 (MEKATVPVAA…SFILDQDDLE (143 aa)) is disordered. Phosphoserine occurs at positions 19 and 50. Over residues 63-79 (KKKPPQQQHHKAKRNRT) the composition is skewed to basic residues. A compositionally biased stretch (low complexity) spans 84–94 (SSSESSSDSDN). Over residues 95–111 (SGGGGGGGGGGGGGGGT) the composition is skewed to gly residues. Over residues 116–131 (SEEEEDDDDEEEEVSE) the composition is skewed to acidic residues. Residue S156 is modified to Phosphoserine. ANK repeat units follow at residues 233-262 (SDNRSLAEACSEGDVNAVRKLLIEGRSVNE), 266-295 (EGESLLCLACSAGYYELAQVLLAMHANVED), 300-329 (GDITPLMAAANGGHVKIVKLLLAHKADVNA), 333-362 (TGNTALTYACAGGYVDVVKVLLESGASIED), 366-395 (NGHTPLMEAGSAGHVEVARLLLENGAGINT), 400-429 (FKESALTLACYKGHLEMVRFLLEAGADQEH), 433-462 (EMHTALMEACMDGHVEVARLLLDSGAQVNM), 466-495 (SFESPLTLAACGGHVELAALLIERGASLEE), 499-528 (EGYTPLMEAAREGHEEMVALLLGQGANINA), 533-562 (TQETALTLACCGGFLEVADFLIKAGADIEL), 563-592 (GCSTPLMEAAQEGHLELVKYLLAAGANVHA), 596-625 (TGDTALTYACENGHTDVADVLLQAGADLEH), 629-658 (GGRTPLMKAARAGHVCTVQFLISKGANVNR), 663-692 (NDHTVLSLACAGGHLAVVELLLAHGADPTH), and 696-725 (DGSTMLIEAAKGGHTSVVCYLLDYPNNLLS). K318 participates in a covalent cross-link: Glycyl lysine isopeptide (Lys-Gly) (interchain with G-Cter in SUMO2). S803 bears the Phosphoserine mark. 10 ANK repeats span residues 1082–1111 (NHDTALTLACAGGHEELVQTLLERGASIEH), 1115–1144 (KGFTPLILAATAGHVGVVEILLDNGADIEA), 1149–1178 (TKDTPLSLACSGGRQEVVELLLARGANKEH), 1182–1211 (SDYTPLSLAASGGYVNIIKILLNAGAEINS), 1217–1246 (LGISPLMLAAMNGHTAAVKLLLDMGSDINA), 1251–1280 (NRNTALTLACFQGRTEVVSLLLDRKANVEH), 1284–1313 (TGLTPLMEAASGGYAEVGRVLLDKGADVNA), 1319–1348 (SRDTALTIAADKGHYKFCELLIGRGAHIDV), 1352–1381 (KGNTPLWLAANGGHLDVVQLLVQAGADVDA), and 1385–1414 (RKITPLMAAFRKGHVKVVRYLVKEVNQFPS). Residues 1442–1526 (VQAKDRQAAE…EKEKLKVEDE (85 aa)) adopt a coiled-coil conformation. S1457 is subject to Phosphoserine. 2 disordered regions span residues 1479–1500 (AKREKRKEKRRKKKEEQRRKLE) and 1517–1717 (EKEK…QKRE). A compositionally biased stretch (basic residues) spans 1481–1491 (REKRKEKRRKK). Composition is skewed to low complexity over residues 1531-1550 (TEPPSATTTTTIGISATWTT), 1602-1611 (ESKSSSTSES), and 1620-1632 (SSCSDESSNSNSS). 2 positions are modified to phosphoserine: S1635 and S1639. Polar residues-rich tracts occupy residues 1642–1652 (VVTTTVSSKKQ) and 1675–1703 (LSETISEGTSNSLSTCTKSGPSPLSSPNG). S1696, S1700, and S1709 each carry phosphoserine. The 65-residue stretch at 1725 to 1789 (RRSKKVSVPS…ESTRQATQLI (65 aa)) folds into the KH domain. An Asymmetric dimethylarginine modification is found at R1874. Disordered regions lie at residues 1906–1995 (PRLP…PSVR), 2011–2192 (TTVT…HKNS), and 2273–2332 (VVSS…YGSV). Composition is skewed to low complexity over residues 1950–1995 (SNQN…PSVR) and 2011–2028 (TTVTTTASNNNTAPTNAT). Phosphoserine occurs at positions 2042, 2044, 2045, 2047, 2059, and 2067. The segment covering 2066–2078 (ASPNKVASSSEQE) has biased composition (polar residues). Over residues 2095-2106 (SSSSSGSSSAHS) the composition is skewed to low complexity. 2 stretches are compositionally biased toward polar residues: residues 2107 to 2127 (NQQQPPGSVSQEPRPPLQQSQ) and 2273 to 2303 (VVSSQSTPESMLSGKSSYLPNSDPLHQSDTS). Over residues 2308–2318 (FRPPLQRPAPS) the composition is skewed to pro residues. 2 positions are modified to phosphoserine: S2373 and S2401. Residues 2381 to 2423 (CSSASNDSSAQSVSSGVRAPSPAPSSVPLGSEKPSNVSQDRKV) are disordered. The span at 2382–2411 (SSASNDSSAQSVSSGVRAPSPAPSSVPLGS) shows a compositional bias: low complexity.

As to quaternary structure, interacts (via N-terminus) with NOD2. Interacts with CDK2, MCM3, MCM5, MCM7, CDC6 and PCNA. Interacts with MAVS and IFIH1. Interacts (via the second ankyrin repeat cluster) with DDX58. In terms of assembly, (Microbial infection) Interacts with enterovirus 71/EV71 capsid protein VP1. Phosphorylated by CDK2. As to expression, ubiquitously expressed.

It is found in the cytoplasm. It localises to the nucleus. In terms of biological role, could play pivotal roles in cell cycle and DNA regulation. Involved in innate immune defense against viruse by positively regulating the viral dsRNA receptors DDX58 and IFIH1 signaling pathways. Involves in NOD2- and NOD1-mediated responses to bacteria suggesting a role in innate antibacterial immune pathways too. Target of enterovirus 71 which is the major etiological agent of HFMD (hand, foot and mouth disease). Could play a central role for the formation and/or maintenance of the blood vessels of the circulation system. The protein is Ankyrin repeat domain-containing protein 17 (ANKRD17) of Homo sapiens (Human).